We begin with the raw amino-acid sequence, 55 residues long: Large ribosomal subunit protein bL33 (55 aa).

This sequence belongs to the bacterial ribosomal protein bL33 family.

In Aromatoleum aromaticum (strain DSM 19018 / LMG 30748 / EbN1) (Azoarcus sp. (strain EbN1)), this protein is Large ribosomal subunit protein bL33.